Here is a 381-residue protein sequence, read N- to C-terminus: Queuine tRNA-ribosyltransferase (381 aa).

Residue aspartate 92 is the Proton acceptor of the active site. Substrate contacts are provided by residues 92–96, aspartate 146, glutamine 190, and glycine 217; that span reads DSGGF. The RNA binding stretch occupies residues 248–254; it reads GVGRPED. Residue aspartate 267 is the Nucleophile of the active site. Residues 272–276 form an RNA binding; important for wobble base 34 recognition region; it reads TRNAR. The Zn(2+) site is built by cysteine 305, cysteine 307, cysteine 310, and histidine 337.

Belongs to the queuine tRNA-ribosyltransferase family. In terms of assembly, homodimer. Within each dimer, one monomer is responsible for RNA recognition and catalysis, while the other monomer binds to the replacement base PreQ1. Zn(2+) is required as a cofactor.

It catalyses the reaction 7-aminomethyl-7-carbaguanine + guanosine(34) in tRNA = 7-aminomethyl-7-carbaguanosine(34) in tRNA + guanine. It functions in the pathway tRNA modification; tRNA-queuosine biosynthesis. In terms of biological role, catalyzes the base-exchange of a guanine (G) residue with the queuine precursor 7-aminomethyl-7-deazaguanine (PreQ1) at position 34 (anticodon wobble position) in tRNAs with GU(N) anticodons (tRNA-Asp, -Asn, -His and -Tyr). Catalysis occurs through a double-displacement mechanism. The nucleophile active site attacks the C1' of nucleotide 34 to detach the guanine base from the RNA, forming a covalent enzyme-RNA intermediate. The proton acceptor active site deprotonates the incoming PreQ1, allowing a nucleophilic attack on the C1' of the ribose to form the product. After dissociation, two additional enzymatic reactions on the tRNA convert PreQ1 to queuine (Q), resulting in the hypermodified nucleoside queuosine (7-(((4,5-cis-dihydroxy-2-cyclopenten-1-yl)amino)methyl)-7-deazaguanosine). This chain is Queuine tRNA-ribosyltransferase, found in Xanthomonas oryzae pv. oryzae (strain MAFF 311018).